The following is a 674-amino-acid chain: Penicillin-binding protein activator LpoA (674 aa).

An N-terminal signal peptide occupies residues 1–31 (MLSSTFVRTKAGRSKPVRLTAVIAAALFLAG). Cysteine 32 is lipidated: N-palmitoyl cysteine. A lipid anchor (S-diacylglycerol cysteine) is attached at cysteine 32. The tract at residues 291 to 349 (GVTPSTPVQQQQPASVPEQAAQPASTDPNANGAVSTSAPDAAPVTAAQPSAPSTAPITP) is disordered. A compositionally biased stretch (low complexity) spans 292-315 (VTPSTPVQQQQPASVPEQAAQPAS). A compositionally biased stretch (polar residues) spans 316-328 (TDPNANGAVSTSA). Over residues 331 to 349 (AAPVTAAQPSAPSTAPITP) the composition is skewed to low complexity.

Belongs to the LpoA family. As to quaternary structure, interacts with PBP1a.

The protein resides in the cell outer membrane. In terms of biological role, regulator of peptidoglycan synthesis that is essential for the function of penicillin-binding protein 1A (PBP1a). The sequence is that of Penicillin-binding protein activator LpoA from Serratia proteamaculans (strain 568).